Here is a 653-residue protein sequence, read N- to C-terminus: Sodium-dependent phosphate transporter 2 (653 aa).

Residues 1–5 are Extracellular-facing; it reads MAIDG. Residues 6 to 26 traverse the membrane as a helical segment; that stretch reads YLWMVILGFIIAFILAFSVGA. Topologically, residues 27–46 are cytoplasmic; sequence NDVANSFGTAVGSGVVTLRQ. The chain crosses the membrane as a helical span at residues 47–67; that stretch reads ACILASIFETTGSVLLGAKVG. The Extracellular segment spans residues 68–86; sequence ETIRKGIIDVNLYNETVET. The N-linked (GlcNAc...) asparagine glycan is linked to Asn-81. Residues 87 to 107 form a helical membrane-spanning segment; it reads LMAGEVSAMVGSAVWQLIASF. The Cytoplasmic portion of the chain corresponds to 108–109; the sequence is LR. The helical transmembrane segment at 110 to 130 threads the bilayer; it reads LPISGTHCIVGSTIGFSLVAI. The Extracellular segment spans residues 131-142; that stretch reads GTQGVQWMELVK. A helical membrane pass occupies residues 143 to 163; sequence IVASWFISPLLSGFMSGVLFI. The Cytoplasmic portion of the chain corresponds to 164-190; sequence LIRIFILKKEDPVPNGLRALPVFYAAT. Residues 191-211 form a helical membrane-spanning segment; that stretch reads IAINVFSIMYTGAPVLGLVLP. Topologically, residues 212-213 are extracellular; that stretch reads IW. Residues 214 to 234 traverse the membrane as a helical segment; sequence AIALISFGVALLFALFVWLFV. At 235 to 483 the chain is on the cytoplasmic side; that stretch reads CPWMRRKIAG…EEKEEKDTAE (249 aa). Phosphoserine occurs at positions 253, 256, 259, and 268. A disordered region spans residues 275–311; the sequence is PGAKANDDSTVPLTGSAGEPSGTSEGTSVGNHPRASY. The segment covering 295 to 304 has biased composition (polar residues); sequence SGTSEGTSVG. Residues Ser-316 and Ser-385 each carry the phosphoserine modification. Residues 459 to 478 form a disordered region; the sequence is SELTDPDQPRDDPAEEEKEE. Residues 484–504 traverse the membrane as a helical segment; that stretch reads VHLLFHFLQVLTACFGSFAHG. At 505–531 the chain is on the extracellular side; it reads GNDVSNAIGPLVALWLIYEQGAVLQEA. A helical membrane pass occupies residues 532-552; that stretch reads VTPVWLLFYGGVGICTGLWVW. Residues 553–572 lie on the Cytoplasmic side of the membrane; sequence GRRVIQTMGKDLTPITPSSG. The chain crosses the membrane as a helical span at residues 573–587; that stretch reads FTIELASAFTVVIAS. The Extracellular portion of the chain corresponds to 588 to 594; it reads NVGLPVS. The helical transmembrane segment at 595 to 610 threads the bilayer; it reads TTHCKVGSVVAVGWIR. Topologically, residues 611-622 are cytoplasmic; it reads SRKAVDWRLFRN. Residues 623–643 traverse the membrane as a helical segment; the sequence is IFVAWFVTVPVAGLFSAAIMA. Over 644 to 653 the chain is Extracellular; that stretch reads LLMYGILPYV.

The protein belongs to the inorganic phosphate transporter (PiT) (TC 2.A.20) family. As to quaternary structure, homodimer.

It localises to the cell membrane. The protein resides in the apical cell membrane. It catalyses the reaction 2 Na(+)(out) + phosphate(out) = 2 Na(+)(in) + phosphate(in). Sodium-phosphate symporter which preferentially transports the monovalent form of phosphate with a stoichiometry of two sodium ions per phosphate ion. Plays a critical role in the determination of bone quality and strength by providing phosphate for bone mineralization. Required to maintain normal cerebrospinal fluid phosphate levels. Mediates phosphate-induced calcification of vascular smooth muscle cells (VCMCs) and can functionally compensate for loss of SLC20A1 in VCMCs. In terms of biological role, (Microbial infection) Functions as a retroviral receptor for feline leukemia virus subgroup B (FeLV-B). In Felis catus (Cat), this protein is Sodium-dependent phosphate transporter 2 (SLC20A2).